The following is a 63-amino-acid chain: Large ribosomal subunit protein bL32 (63 aa).

Disordered stretches follow at residues 1–25 (MAVP…LTTP) and 42–63 (VSPK…QNND). A compositionally biased stretch (basic residues) spans 7–20 (KTSKQKKRSRRGHI). Polar residues predominate over residues 54-63 (ANENKQQNND).

The protein belongs to the bacterial ribosomal protein bL32 family.

This chain is Large ribosomal subunit protein bL32, found in Lactobacillus johnsonii (strain CNCM I-12250 / La1 / NCC 533).